A 187-amino-acid polypeptide reads, in one-letter code: Large ribosomal subunit protein eL18B (187 aa).

A Phosphothreonine modification is found at Thr-134. Residue Ser-136 is modified to Phosphoserine.

The protein belongs to the eukaryotic ribosomal protein eL18 family. Component of the large ribosomal subunit (LSU). Mature yeast ribosomes consist of a small (40S) and a large (60S) subunit. The 40S small subunit contains 1 molecule of ribosomal RNA (18S rRNA) and at least 33 different proteins. The large 60S subunit contains 3 rRNA molecules (25S, 5.8S and 5S rRNA) and at least 46 different proteins. eL18 interacts with NAP1.

It is found in the cytoplasm. Functionally, component of the ribosome, a large ribonucleoprotein complex responsible for the synthesis of proteins in the cell. The small ribosomal subunit (SSU) binds messenger RNAs (mRNAs) and translates the encoded message by selecting cognate aminoacyl-transfer RNA (tRNA) molecules. The large subunit (LSU) contains the ribosomal catalytic site termed the peptidyl transferase center (PTC), which catalyzes the formation of peptide bonds, thereby polymerizing the amino acids delivered by tRNAs into a polypeptide chain. The nascent polypeptides leave the ribosome through a tunnel in the LSU and interact with protein factors that function in enzymatic processing, targeting, and the membrane insertion of nascent chains at the exit of the ribosomal tunnel. The chain is Large ribosomal subunit protein eL18B (rpl1802) from Schizosaccharomyces pombe (strain 972 / ATCC 24843) (Fission yeast).